We begin with the raw amino-acid sequence, 242 residues long: Ubiquitin-conjugating enzyme E2 6 (242 aa).

The Cytoplasmic portion of the chain corresponds to 1-220 (MASRQSQKRL…HSTPSFGVQR (220 aa)). Residues 5–156 (QSQKRLTKEY…NQRFTKQFPD (152 aa)) enclose the UBC core domain. The active-site Glycyl thioester intermediate is cysteine 87. The segment at 170-190 (AREQAAATTDSTDPEKPFDVR) is disordered. Residues 221-240 (FTLVGVVVAAFIAAYFNFFS) form a helical membrane-spanning segment.

This sequence belongs to the ubiquitin-conjugating enzyme family.

Its subcellular location is the endoplasmic reticulum membrane. The catalysed reaction is S-ubiquitinyl-[E1 ubiquitin-activating enzyme]-L-cysteine + [E2 ubiquitin-conjugating enzyme]-L-cysteine = [E1 ubiquitin-activating enzyme]-L-cysteine + S-ubiquitinyl-[E2 ubiquitin-conjugating enzyme]-L-cysteine.. It participates in protein modification; protein ubiquitination. Catalyzes the covalent attachment of ubiquitin to other proteins. Functions in degradation of misfolded or regulated proteins localized in the endoplasmic reticulum (ER) lumen or membrane via the ubiquitin-proteasome system. Cognate E2 conjugating enzyme for the DOA10 ubiquitin ligase complex, which is part of the ERAD-C pathway responsible for the rapid degradation of membrane proteins with misfolded cytoplasmic domains. This Debaryomyces hansenii (strain ATCC 36239 / CBS 767 / BCRC 21394 / JCM 1990 / NBRC 0083 / IGC 2968) (Yeast) protein is Ubiquitin-conjugating enzyme E2 6 (UBC6).